A 260-amino-acid polypeptide reads, in one-letter code: MAGSPLLCGPRAGGVGLLVLLLLGLLRLPPTLSARPVKEPRSLSAASAPLAETSTPLRLRRAVPRGEAAGAVQELARALAHLLEAERQERARAEAQEAEDQQARVLAQLLRAWGSPRASDPPLAPDDDPDAPAAQLARALLRARLDPAALAAQLVPAPAPAAALRPRPPVYDDGPTGPDVEDAADETPDVDPELLRYLLGRILTGSSEPEAAPAPRRLRRAVDQDLGPEVPPENVLGALLRVKRLENSSPQAPARRLLPP.

A signal peptide spans 1-33; it reads MAGSPLLCGPRAGGVGLLVLLLLGLLRLPPTLS. The interval 34–215 is proSAAS(1-180); it reads ARPVKEPRSL…SSEPEAAPAP (182 aa). 2 disordered regions span residues 162–187 and 206–234; these read AALR…ADET and SSEP…PPEN. The C-terminal inhibitory domain; interacts with PCSK1 stretch occupies residues 221–260; the sequence is AVDQDLGPEVPPENVLGALLRVKRLENSSPQAPARRLLPP. The short motif at 239–244 is the Sufficient for inhibition of PCSK1 element; the sequence is LLRVKR.

In terms of assembly, interacts via the C-terminal inhibitory domain with PCSK1 65 kDa form. In terms of processing, proteolytically cleaved in the Golgi. Big SAAS, Little SAAS, PEN and Big LEN are the major processed peptides in proSAAS-overexpressing PC-12 phaeochromocytoma cells (lacking PCSK1 and PCSK2 endopeptidases). Peptides corresponding to PEN and a proSAAS aa 40-59 have been detected in wild-type PC-12 cells. In terms of tissue distribution, expressed in adult brain (all major structural regions), adrenal gland (medulla) and spinal cord (dorsal and ventral horn). Expressed in pancreatic islands.

Its subcellular location is the secreted. The protein localises to the golgi apparatus. It localises to the trans-Golgi network. Functionally, may function in the control of the neuroendocrine secretory pathway. Proposed be a specific endogenous inhibitor of PCSK1. ProSAAS and Big PEN-LEN, both containing the C-terminal inhibitory domain, but not the processed peptides reduce PCSK1 activity in the endoplasmic reticulum and Golgi. It reduces the activity of the 87 kDa form but not the autocatalytically derived 65 kDa form of PCSK1. Subsequent processing of proSAAS may eliminate the inhibition. Slows down convertase-mediated processing of proopiomelanocortin and proenkephalin. May control the intracellular timing of PCSK1 rather than its total level of activity. In terms of biological role, endogenous ligand for GPR171. Neuropeptide involved in the regulation of feeding. The chain is ProSAAS (Pcsk1n) from Rattus norvegicus (Rat).